The primary structure comprises 1103 residues: Centrosomal protein of 126 kDa (1103 aa).

Over residues 1–12 (MLAGRPGAQSAG) the composition is skewed to low complexity. Residues 1-36 (MLAGRPGAQSAGAGVGAGPPDAPGARDGGGRPRPGA) form a disordered region. Coiled coils occupy residues 43-116 (HLEK…FQRA) and 182-222 (QKHL…KLLE). 2 disordered regions span residues 380-409 (NTAE…ESPT) and 723-812 (ESKA…PGQS). Residues 723-735 (ESKAPVHASDSKT) show a composition bias toward basic and acidic residues. Positions 736-748 (QKTKPQRGVKFTR) are enriched in basic residues. Polar residues-rich tracts occupy residues 763–784 (RKPT…QTQG) and 798–812 (NIKS…PGQS).

In terms of assembly, interacts with DCTN1.

Its subcellular location is the midbody. It is found in the cytoplasm. The protein localises to the cytoskeleton. It localises to the microtubule organizing center. The protein resides in the centrosome. Its subcellular location is the cilium basal body. Functionally, participate in cytokinesis. Necessary for microtubules and mitotic spindle organization. Involved in primary cilium formation. This is Centrosomal protein of 126 kDa from Mus musculus (Mouse).